Consider the following 41-residue polypeptide: Large ribosomal subunit protein bL36 (41 aa).

This sequence belongs to the bacterial ribosomal protein bL36 family.

The sequence is that of Large ribosomal subunit protein bL36 from Chelativorans sp. (strain BNC1).